A 178-amino-acid polypeptide reads, in one-letter code: Cytochrome b6-f complex iron-sulfur subunit (178 aa).

The chain crosses the membrane as a helical span at residues 20 to 42; that stretch reads LLTFGSVTGVALGALYPVVNYFI. Residues 65 to 161 form the Rieske domain; that stretch reads ATGWLSSHPE…VSVENDNVFV (97 aa). Positions 107, 109, 125, and 128 each coordinate [2Fe-2S] cluster. Cysteines 112 and 127 form a disulfide.

It belongs to the Rieske iron-sulfur protein family. As to quaternary structure, the 4 large subunits of the cytochrome b6-f complex are cytochrome b6, subunit IV (17 kDa polypeptide, PetD), cytochrome f and the Rieske protein, while the 4 small subunits are PetG, PetL, PetM and PetN. The complex functions as a dimer. [2Fe-2S] cluster is required as a cofactor.

The protein resides in the cellular thylakoid membrane. It carries out the reaction 2 oxidized [plastocyanin] + a plastoquinol + 2 H(+)(in) = 2 reduced [plastocyanin] + a plastoquinone + 4 H(+)(out). In terms of biological role, component of the cytochrome b6-f complex, which mediates electron transfer between photosystem II (PSII) and photosystem I (PSI), cyclic electron flow around PSI, and state transitions. The chain is Cytochrome b6-f complex iron-sulfur subunit from Parasynechococcus marenigrum (strain WH8102).